The primary structure comprises 367 residues: Probable butyrate kinase (367 aa).

It belongs to the acetokinase family.

It localises to the cytoplasm. It carries out the reaction butanoate + ATP = butanoyl phosphate + ADP. The chain is Probable butyrate kinase from Bacillus cereus (strain Q1).